Consider the following 398-residue polypeptide: Probable RNA methyltransferase sce1580 (398 aa).

Residues 1-24 (MRVPEIPEETASPLRAGDPPAQVA) form a disordered region. The active-site Proton acceptor is the E140. Residues 146-378 (GPARTTLCVS…TLVRRPRGRD (233 aa)) form the Radical SAM core domain. C153 and C383 are disulfide-bonded. C160, C164, and C167 together coordinate [4Fe-4S] cluster. S-adenosyl-L-methionine is bound by residues 211–212 (GE), S243, 265–267 (SLN), and N340. The S-methylcysteine intermediate role is filled by C383.

This sequence belongs to the radical SAM superfamily. RlmN family. The cofactor is [4Fe-4S] cluster.

The protein resides in the cytoplasm. The sequence is that of Probable RNA methyltransferase sce1580 from Sorangium cellulosum (strain So ce56) (Polyangium cellulosum (strain So ce56)).